Here is a 423-residue protein sequence, read N- to C-terminus: Limonoid 21-O-acetyltransferse (423 aa).

Active-site proton acceptor residues include His152 and Asp362.

Belongs to the plant acyltransferase family. In terms of assembly, monomer. As to expression, mainly expressed in petioles.

It catalyses the reaction isomeliandiol + acetyl-CoA = 21-O-acetyl-isomeliandiol + CoA. It participates in secondary metabolite biosynthesis; terpenoid biosynthesis. Acetyltransferase involved in the biosynthesis of limonoids triterpene natural products such as azadirachtin, an antifeedant widely used as bioinsecticide, and possessing many medicinal applications including anti-tumoral, anti-malarial, anti-rheumatic, antibacterial, anti-inflammatory, anti-pyretic and diuretic effects. Catalyzes the formation of 21-O-acetyl-isomeliandiol from isomeliandiol. The protein is Limonoid 21-O-acetyltransferse of Melia azedarach (Chinaberry tree).